Here is a 227-residue protein sequence, read N- to C-terminus: Acyl-protein thioesterase 1 (227 aa).

Catalysis depends on charge relay system residues Ser119, Asp173, and His207.

This sequence belongs to the AB hydrolase superfamily. AB hydrolase 2 family.

It localises to the cytoplasm. It is found in the nucleus. The catalysed reaction is S-hexadecanoyl-L-cysteinyl-[protein] + H2O = L-cysteinyl-[protein] + hexadecanoate + H(+). Hydrolyzes fatty acids from S-acylated cysteine residues in proteins with a strong preference for palmitoylated G-alpha proteins over other acyl substrates. Mediates the deacylation of G-alpha proteins such as GPA1 in vivo, but has weak or no activity toward palmitoylated Ras proteins. Has weak lysophospholipase activity in vitro; however such activity may not exist in vivo. The protein is Acyl-protein thioesterase 1 of Yarrowia lipolytica (strain CLIB 122 / E 150) (Yeast).